The primary structure comprises 186 residues: Zinc finger AN1 domain-containing stress-associated protein 12 (186 aa).

2 AN1-type zinc fingers span residues 10-58 (PDLG…HGSR) and 97-147 (KKKK…INTA). Positions 16, 21, 31, 34, 39, 42, 48, 50, 103, 108, 120, 123, 128, 131, 137, and 139 each coordinate Zn(2+). Residues 167-186 (KGCGRGSSVSSKSSPSVRSF) are disordered. Positions 172 to 186 (GSSVSSKSSPSVRSF) are enriched in low complexity.

Its function is as follows. May be involved in environmental stress response. In Arabidopsis thaliana (Mouse-ear cress), this protein is Zinc finger AN1 domain-containing stress-associated protein 12 (SAP12).